The primary structure comprises 734 residues: Photosystem I P700 chlorophyll a apoprotein A2 (734 aa).

A run of 8 helical transmembrane segments spans residues 46 to 69 (IFASHFGQLAIIFLWTSGNLFHVA), 135 to 158 (LYNGSMFLLFIATLALFAGWLHLE), 175 to 199 (LNHHLSALFGLSSLAWSGHLIHVAI), 273 to 291 (IAHHHLAIAVLFIVAGHMY), 330 to 353 (LHFQLGLALASLGVITSLVAQHMY), 369 to 395 (AALYTHHQYIAGFIMTGAFAHGAIFFI), 417 to 439 (AIISHLSWVTLFLGFHTLGLYVH), and 517 to 535 (FLVHHAIALGLHTTTLILV). [4Fe-4S] cluster contacts are provided by Cys-559 and Cys-568. 2 consecutive transmembrane segments (helical) span residues 575–596 (AFYLAVFWMLNTIGWTTFYWHW) and 643–665 (LAVWGWMFLFGHLVWATGFMFLI). Chlorophyll a-binding residues include His-654, Met-662, and Tyr-670. Trp-671 is a binding site for phylloquinone. Residues 707–727 (LVGLAHFSVGYVFTYAAFLIA) form a helical membrane-spanning segment.

This sequence belongs to the PsaA/PsaB family. In terms of assembly, the PsaA/B heterodimer binds the P700 chlorophyll special pair and subsequent electron acceptors. PSI consists of a core antenna complex that captures photons, and an electron transfer chain that converts photonic excitation into a charge separation. The eukaryotic PSI reaction center is composed of at least 11 subunits. P700 is a chlorophyll a/chlorophyll a' dimer, A0 is one or more chlorophyll a, A1 is one or both phylloquinones and FX is a shared 4Fe-4S iron-sulfur center. is required as a cofactor.

Its subcellular location is the plastid. It is found in the chloroplast thylakoid membrane. The catalysed reaction is reduced [plastocyanin] + hnu + oxidized [2Fe-2S]-[ferredoxin] = oxidized [plastocyanin] + reduced [2Fe-2S]-[ferredoxin]. Functionally, psaA and PsaB bind P700, the primary electron donor of photosystem I (PSI), as well as the electron acceptors A0, A1 and FX. PSI is a plastocyanin/cytochrome c6-ferredoxin oxidoreductase, converting photonic excitation into a charge separation, which transfers an electron from the donor P700 chlorophyll pair to the spectroscopically characterized acceptors A0, A1, FX, FA and FB in turn. Oxidized P700 is reduced on the lumenal side of the thylakoid membrane by plastocyanin or cytochrome c6. The sequence is that of Photosystem I P700 chlorophyll a apoprotein A2 from Euglena gracilis.